A 302-amino-acid chain; its full sequence is Oxygen-dependent coproporphyrinogen-III oxidase (302 aa).

Serine 94 contributes to the substrate binding site. Residues histidine 98 and histidine 108 each contribute to the a divalent metal cation site. Histidine 108 (proton donor) is an active-site residue. 110 to 112 (NVR) is a substrate binding site. Residues histidine 147 and histidine 177 each contribute to the a divalent metal cation site. Residues 242-277 (YVEFNLVYDRGTLFGLQTGGRTESILMSMPPLVRWQ) are important for dimerization. Residue 260-262 (GGR) coordinates substrate.

The protein belongs to the aerobic coproporphyrinogen-III oxidase family. Homodimer. A divalent metal cation is required as a cofactor.

Its subcellular location is the cytoplasm. It catalyses the reaction coproporphyrinogen III + O2 + 2 H(+) = protoporphyrinogen IX + 2 CO2 + 2 H2O. It participates in porphyrin-containing compound metabolism; protoporphyrin-IX biosynthesis; protoporphyrinogen-IX from coproporphyrinogen-III (O2 route): step 1/1. Functionally, involved in the heme biosynthesis. Catalyzes the aerobic oxidative decarboxylation of propionate groups of rings A and B of coproporphyrinogen-III to yield the vinyl groups in protoporphyrinogen-IX. This is Oxygen-dependent coproporphyrinogen-III oxidase from Shewanella putrefaciens (strain CN-32 / ATCC BAA-453).